We begin with the raw amino-acid sequence, 1543 residues long: ABC multidrug transporter AFR1 (1543 aa).

The disordered stretch occupies residues 1–85; the sequence is MSAAGVPAEL…DGKQKRLPAD (85 aa). Positions 18-41 are enriched in polar residues; the sequence is TATTQNPSGLANSQVTSGPVSSAT. Over residues 62 to 83 the composition is skewed to basic and acidic residues; it reads AVEAEKAEAIDAAGDGKQKRLP. Asn-117 carries an N-linked (GlcNAc...) asparagine glycan. The tract at residues 119-157 is disordered; the sequence is SQRSQHELHRPTTRHSVRSSFSRKDRVVSRLTQDDAEKA. Residues 140–157 are compositionally biased toward basic and acidic residues; that stretch reads SRKDRVVSRLTQDDAEKA. 2 N-linked (GlcNAc...) asparagine glycosylation sites follow: Asn-208 and Asn-398. The region spanning 222–474 is the ABC transporter 1 domain; sequence IKVLGIFGFN…MIGLGYRDLP (253 aa). Transmembrane regions (helical) follow at residues 585 to 605, 619 to 639, 670 to 690, 695 to 715, and 727 to 747; these read FGIS…GSVY, GGLL…ELPS, VPYN…MGGL, GAFF…SAFF, and VAAR…GYMI. Asn-823 is a glycosylation site (N-linked (GlcNAc...) asparagine). Residues 845–865 form a helical membrane-spanning segment; it reads FGILLGFFTFFMFLQMLFIEV. The ABC transporter 2 domain occupies 918 to 1160; it reads FTWEGLSYTV…VLIDYLERNG (243 aa). 954–961 contributes to the ATP binding site; the sequence is GASGAGKT. Residue Asn-1223 is glycosylated (N-linked (GlcNAc...) asparagine). A run of 6 helical transmembrane segments spans residues 1254 to 1274, 1285 to 1305, 1336 to 1356, 1366 to 1386, 1391 to 1411, and 1517 to 1537; these read WTRL…FLQL, VFAI…IEPQ, MPYS…GVGF, FFLM…AVAA, ILIA…FCGV, and FGIF…AARF.

Belongs to the ABC transporter superfamily. ABCG family. PDR (TC 3.A.1.205) subfamily.

Its subcellular location is the cell membrane. It catalyses the reaction itraconazole(in) + ATP + H2O = itraconazole(out) + ADP + phosphate + H(+). The catalysed reaction is voriconazole(in) + ATP + H2O = voriconazole(out) + ADP + phosphate + H(+). The enzyme catalyses fluconazole(in) + ATP + H2O = fluconazole(out) + ADP + phosphate + H(+). In terms of biological role, major pleiotropic ABC efflux transporter that confers resistance to structurally and functionally unrelated compounds including azoles such as fluconazole (FLC), itraconazole (ITC), posaconazole (POS), and voriconazole (VRC). Is also able to efflux the eukaryote protein synthesis inhibitor cycloheximide (CHX). The chain is ABC multidrug transporter AFR1 from Cryptococcus neoformans var. grubii serotype A (strain H99 / ATCC 208821 / CBS 10515 / FGSC 9487) (Filobasidiella neoformans var. grubii).